Consider the following 378-residue polypeptide: Cyclic di-GMP phosphodiesterase response regulator RpfG (378 aa).

The Response regulatory domain occupies 29–147 (NIVIVDDQMS…ELRARCSNLL (119 aa)). Asp80 carries the post-translational modification 4-aspartylphosphate. The region spanning 174-371 (VEERERETLS…LEQICGQFST (198 aa)) is the HD-GYP domain.

Interacts with a subset of GGDEF domain-containing proteins. Post-translationally, phosphorylated and activated by RpfC.

It localises to the cytoplasm. The catalysed reaction is 3',3'-c-di-GMP + 2 H2O = 2 GMP + 2 H(+). Its function is as follows. Member of the two-component regulatory system RpfG/RpfC, which is involved in the perception and response to the diffusible signaling factor (DSF), which is essential for cell-cell signaling. Detection of DSF leads to the positive regulation of biofilm dispersal and the production of virulence factors. Activated RpfG degrades cyclic di-GMP to GMP, leading to the activation of Clp, a global transcriptional regulator that regulates a large set of genes in DSF pathway. May also directly control genes involved in biofilm dispersal. The chain is Cyclic di-GMP phosphodiesterase response regulator RpfG (rpfG) from Xanthomonas campestris pv. campestris (strain 8004).